The primary structure comprises 574 residues: R-linalool synthase, chloroplastic (574 aa).

The N-terminal 40 residues, 1 to 40 (MSCARITVTLPYRSAKTSIQRGITHCPALLRPRFSACTPL), are a transit peptide targeting the chloroplast. Residues 52-61 (INGDNSPLKN) are compositionally biased toward polar residues. The segment at 52–71 (INGDNSPLKNTHQHVEERSS) is disordered. Arg287, Asp324, Asp328, Arg467, and Asp470 together coordinate (2E)-geranyl diphosphate. 2 residues coordinate Mg(2+): Asp324 and Asp328. The DDXXD motif motif lies at 324-328 (DDIFD). The Mg(2+) site is built by Asp470, Thr474, and Glu478.

It belongs to the terpene synthase family. Tpsb subfamily. Mg(2+) serves as cofactor. It depends on Mn(2+) as a cofactor.

The protein localises to the plastid. Its subcellular location is the chloroplast. It catalyses the reaction (2E)-geranyl diphosphate + H2O = (R)-linalool + diphosphate. It participates in secondary metabolite biosynthesis; terpenoid biosynthesis. Its function is as follows. Monoterpene synthase that catalyzes the formation of (3R)-linalool from geranyl diphosphate. In Ocimum basilicum (Sweet basil), this protein is R-linalool synthase, chloroplastic (LIS).